The sequence spans 651 residues: Acetyl-coenzyme A synthetase (651 aa).

CoA-binding positions include 189 to 192 (RGGK), threonine 311, and asparagine 335. Residues 387–389 (GEP), 411–416 (DTWWQT), aspartate 500, and arginine 515 contribute to the ATP site. Serine 523 provides a ligand contact to CoA. Arginine 526 serves as a coordination point for ATP. 3 residues coordinate Mg(2+): valine 537, histidine 539, and valine 542. Arginine 586 serves as a coordination point for CoA. Lysine 611 carries the N6-acetyllysine modification.

The protein belongs to the ATP-dependent AMP-binding enzyme family. The cofactor is Mg(2+). Acetylated. Deacetylation by the SIR2-homolog deacetylase activates the enzyme.

The enzyme catalyses acetate + ATP + CoA = acetyl-CoA + AMP + diphosphate. Its function is as follows. Catalyzes the conversion of acetate into acetyl-CoA (AcCoA), an essential intermediate at the junction of anabolic and catabolic pathways. AcsA undergoes a two-step reaction. In the first half reaction, AcsA combines acetate with ATP to form acetyl-adenylate (AcAMP) intermediate. In the second half reaction, it can then transfer the acetyl group from AcAMP to the sulfhydryl group of CoA, forming the product AcCoA. The protein is Acetyl-coenzyme A synthetase of Brucella anthropi (strain ATCC 49188 / DSM 6882 / CCUG 24695 / JCM 21032 / LMG 3331 / NBRC 15819 / NCTC 12168 / Alc 37) (Ochrobactrum anthropi).